Consider the following 239-residue polypeptide: Uridylate kinase (239 aa).

10 to 13 provides a ligand contact to ATP; sequence KISG. Residues 18–23 are involved in allosteric activation by GTP; that stretch reads GESGYG. G52 is a binding site for UMP. Residues G53 and R57 each contribute to the ATP site. UMP contacts are provided by residues D72 and 133 to 140; that span reads TGNPYFTT. 3 residues coordinate ATP: T160, Y166, and D169.

This sequence belongs to the UMP kinase family. As to quaternary structure, homohexamer.

It localises to the cytoplasm. The enzyme catalyses UMP + ATP = UDP + ADP. It participates in pyrimidine metabolism; CTP biosynthesis via de novo pathway; UDP from UMP (UMPK route): step 1/1. With respect to regulation, allosterically activated by GTP. Inhibited by UTP. In terms of biological role, catalyzes the reversible phosphorylation of UMP to UDP. The polypeptide is Uridylate kinase (Chlorobaculum tepidum (strain ATCC 49652 / DSM 12025 / NBRC 103806 / TLS) (Chlorobium tepidum)).